Consider the following 250-residue polypeptide: Triosephosphate isomerase (250 aa).

8–10 (NWK) contributes to the substrate binding site. The active-site Electrophile is H93. Catalysis depends on E165, which acts as the Proton acceptor. Positions 171 and 211 each coordinate substrate.

It belongs to the triosephosphate isomerase family. In terms of assembly, homodimer.

Its subcellular location is the cytoplasm. It carries out the reaction D-glyceraldehyde 3-phosphate = dihydroxyacetone phosphate. The protein operates within carbohydrate biosynthesis; gluconeogenesis. It participates in carbohydrate degradation; glycolysis; D-glyceraldehyde 3-phosphate from glycerone phosphate: step 1/1. Functionally, involved in the gluconeogenesis. Catalyzes stereospecifically the conversion of dihydroxyacetone phosphate (DHAP) to D-glyceraldehyde-3-phosphate (G3P). The chain is Triosephosphate isomerase from Malacoplasma penetrans (strain HF-2) (Mycoplasma penetrans).